The chain runs to 552 residues: ATP synthase subunit alpha (552 aa).

ATP is bound at residue 173-180; that stretch reads GDRQTGKS. Residues 509–552 are disordered; that stretch reads KPQFSGGSKGSNVPKDVDAGATDADDISQEKITTRKGGATAARG.

It belongs to the ATPase alpha/beta chains family. F-type ATPases have 2 components, CF(1) - the catalytic core - and CF(0) - the membrane proton channel. CF(1) has five subunits: alpha(3), beta(3), gamma(1), delta(1), epsilon(1). CF(0) has three main subunits: a(1), b(2) and c(9-12). The alpha and beta chains form an alternating ring which encloses part of the gamma chain. CF(1) is attached to CF(0) by a central stalk formed by the gamma and epsilon chains, while a peripheral stalk is formed by the delta and b chains.

Its subcellular location is the cell membrane. It carries out the reaction ATP + H2O + 4 H(+)(in) = ADP + phosphate + 5 H(+)(out). Functionally, produces ATP from ADP in the presence of a proton gradient across the membrane. The alpha chain is a regulatory subunit. The protein is ATP synthase subunit alpha of Kineococcus radiotolerans (strain ATCC BAA-149 / DSM 14245 / SRS30216).